The sequence spans 553 residues: Copine-9 (553 aa).

C2 domains are found at residues 1–125 (MSLS…ERPL) and 132–255 (KCGT…FTVY). D163, D169, D225, D227, and D233 together coordinate Ca(2+). The VWFA domain maps to 299–500 (NFTVAIDFTA…VQFVPFRDYV (202 aa)). The interval 531-553 (TRDIQPRPPPPVSPNPTPAPEQP) is disordered. Residues 536–553 (PRPPPPVSPNPTPAPEQP) are compositionally biased toward pro residues.

This sequence belongs to the copine family. Ca(2+) is required as a cofactor.

Probable calcium-dependent phospholipid-binding protein that may play a role in calcium-mediated intracellular processes. Plays a role in dendrite formation by melanocytes. This is Copine-9 from Mus musculus (Mouse).